The sequence spans 328 residues: Nuclear transcription factor Y subunit A-8 (328 aa).

Residues lysine 54–arginine 86 are disordered. A compositionally biased stretch (low complexity) spans serine 57–aspartate 75. A compositionally biased stretch (polar residues) spans valine 76 to arginine 86. The Subunit association domain (SAD) signature appears at phenylalanine 175–asparagine 198. A DNA-binding region (NFYA/HAP2-type) is located at residues lysine 205–threonine 230.

Belongs to the NFYA/HAP2 subunit family. As to quaternary structure, heterotrimeric transcription factor composed of three components, NF-YA, NF-YB and NF-YC. NF-YB and NF-YC must interact and dimerize for NF-YA association and DNA binding. In terms of tissue distribution, expressed in the whole plant, except roots.

It is found in the nucleus. Its function is as follows. Stimulates the transcription of various genes by recognizing and binding to a CCAAT motif in promoters. In Arabidopsis thaliana (Mouse-ear cress), this protein is Nuclear transcription factor Y subunit A-8 (NFYA8).